Consider the following 375-residue polypeptide: Methylthioribose-1-phosphate isomerase (375 aa).

Catalysis depends on aspartate 257, which acts as the Proton donor.

This sequence belongs to the eIF-2B alpha/beta/delta subunits family. MtnA subfamily.

The protein resides in the cytoplasm. Its subcellular location is the nucleus. The catalysed reaction is 5-(methylsulfanyl)-alpha-D-ribose 1-phosphate = 5-(methylsulfanyl)-D-ribulose 1-phosphate. It functions in the pathway amino-acid biosynthesis; L-methionine biosynthesis via salvage pathway; L-methionine from S-methyl-5-thio-alpha-D-ribose 1-phosphate: step 1/6. In terms of biological role, catalyzes the interconversion of methylthioribose-1-phosphate (MTR-1-P) into methylthioribulose-1-phosphate (MTRu-1-P). In Leishmania infantum, this protein is Methylthioribose-1-phosphate isomerase.